Consider the following 462-residue polypeptide: Myb-like transcriptional regulator mfmK (462 aa).

3 consecutive HTH myb-type domains span residues 1-54, 56-110, and 113-162; these read MARL…WWNS, ADGT…DPGI, and CDWT…LKHE. 3 consecutive DNA-binding regions (H-T-H motif) follow at residues 32–52, 83–106, and 134–158; these read WRDL…RRWW, WSRV…SQVL, and WATI…STLR. The span at 159–175 shows a compositional bias: basic and acidic residues; the sequence is LKHENESKRESTIRKSV. Disordered stretches follow at residues 159–184, 216–262, and 374–408; these read LKHE…NFEP, DEEE…VDNG, and STTT…RTSI. Acidic residues predominate over residues 216-235; the sequence is DEEEDDDDDDEDNEEDDGDD. Composition is skewed to polar residues over residues 374–385 and 396–408; these read STTTGMDSSSAP and FGTS…RTSI.

The protein resides in the nucleus. Its function is as follows. Myb-like transcriptional regulator; part of the gene cluster that mediates the biosynthesis of the phthalide-terpenoid hybrid 11'-O-desmethylfendlerol. This is Myb-like transcriptional regulator mfmK from Annulohypoxylon moriforme (Filamentous fungus).